We begin with the raw amino-acid sequence, 553 residues long: MDYNVKDFGALGDGVSDDRASIQAAIDAAYAAGGGTVYLPAGEYRVSAAGEPGDGCLMLKDGVYLAGAGMGETVIKLIDGSDQKITGMVRSAYGEETSNFGMRDLTLDGNRDNTSGKVDGWFNGYIPGGDGADRDVTIERVEVREMSGYGFDPHEQTINLTIRDSVAHDNGLDGFVADYLVDSVFENNVAYANDRHGFNVVTSTHDFVMTNNVAYGNGSSGLVVQRGLEDLALPSNILIDGGAYYDNAREGVLLKMTSDITLQNADIHGNGSSGVRVYGAQDVQILDNQIHDNAQAAAVPEVLLQSFDDTAGASGTYYTTLNTRIEGNTISGSANSTYGIQERNDGTDYSSLIDNDIAGVQQPIQLYGPHSTVSGEPGATPQQPSTGSDGEPLVGGDTDDQLQGGSGADRLDGGAGDDILDGGAGRDRLSGGAGADTFVFSAREDSYRTDTAVFNDLILDFEASEDRIDLSALGFSGLGDGYGGTLLLKTNAEGTRTYLKSFEADAEGRRFEVALDGDHTGDLSAANVVFAATGTTTELEVLGDSGTQAGAIV.

PbH1 repeat units follow at residues 133-155 (DRDVTIERVEVREMSGYGFDPHE), 157-179 (TINLTIRDSVAHDNGLDGFVADY), 180-202 (LVDSVFENNVAYANDRHGFNVVT), 204-226 (THDFVMTNNVAYGNGSSGLVVQR), 234-256 (PSNILIDGGAYYDNAREGVLLKM), 257-279 (TSDITLQNADIHGNGSSGVRVYG), 280-301 (AQDVQILDNQIHDNAQAAAVPE), and 320-342 (TLNTRIEGNTISGSANSTYGIQE). Residues 367 to 427 (YGPHSTVSGE…DILDGGAGRD (61 aa)) form a disordered region. Hemolysin-type calcium-binding repeat units lie at residues 403 to 420 (QGGSGADRLDGGAGDDIL) and 421 to 438 (DGGAGRDRLSGGAGADTF).

Belongs to the D-mannuronate C5-epimerase family. Ca(2+) serves as cofactor.

Its subcellular location is the secreted. It catalyses the reaction [(1-&gt;4)-beta-D-mannuronosyl](n) = [alginate](n). Its pathway is glycan biosynthesis; alginate biosynthesis. Its activity is regulated as follows. Inhibited by zinc. Its function is as follows. Converts beta-D-mannuronic acid (M) to alpha-L-guluronic acid (G), but introduces almost exclusively MG blocks, producing a polymer with non-gel-forming capacity. The protein is Mannuronan C5-epimerase AlgE4 of Azotobacter vinelandii.